Reading from the N-terminus, the 349-residue chain is tRNA pseudouridine synthase D (349 aa).

A substrate-binding site is contributed by phenylalanine 27. Catalysis depends on aspartate 80, which acts as the Nucleophile. Residue asparagine 129 participates in substrate binding. The region spanning 155-303 is the TRUD domain; sequence GVPNYFGAQR…VEAARRAMLL (149 aa). Residue phenylalanine 329 participates in substrate binding.

It belongs to the pseudouridine synthase TruD family.

The enzyme catalyses uridine(13) in tRNA = pseudouridine(13) in tRNA. Responsible for synthesis of pseudouridine from uracil-13 in transfer RNAs. This is tRNA pseudouridine synthase D from Klebsiella pneumoniae (strain 342).